The primary structure comprises 2057 residues: Myosin heavy chain, non-muscle (2057 aa).

Residues histidine 78–proline 128 form the Myosin N-terminal SH3-like domain. One can recognise a Myosin motor domain in the interval aspartate 132–aspartate 867. ATP is bound at residue glycine 225–threonine 232. The segment at proline 250–alanine 260 is 25 kDa/50 kDa junction. The 50 kDa/20 kDa junction stretch occupies residues aspartate 722–phenylalanine 734. The segment at leucine 745–histidine 767 is actin-binding. Positions glutamine 782–glycine 798 are reactive sulfhydryl/actin-binding. The IQ domain occupies isoleucine 870–alanine 899. Residues lysine 926–glycine 2016 adopt a coiled-coil conformation. 3 disordered regions span residues glutamate 1124–isoleucine 1144, serine 1782–alanine 1802, and leucine 2008–asparagine 2057. Positions serine 1343–threonine 2010 are alpha-helical tailpiece (LMM). A light meromyosin (LMM) region spans residues serine 1343–asparagine 2057. Residues serine 1782–threonine 1792 show a composition bias toward basic and acidic residues. Positions lysine 2011–asparagine 2057 are globular tailpiece. Serine 2021 and serine 2022 each carry phosphoserine. Residues serine 2044–asparagine 2057 show a composition bias toward acidic residues.

This sequence belongs to the TRAFAC class myosin-kinesin ATPase superfamily. Myosin family. As to quaternary structure, interacts with sau. Interacts with ck and Ubr3. In terms of processing, ubiquitinated. In Johnston's organ, expressed in neurons and scolopale cells.

The protein localises to the cell projection. The protein resides in the cilium. Its subcellular location is the cytoplasm. In terms of biological role, nonmuscle myosin appears to be responsible for cellularization. Required for morphogenesis and cytokinesis. Necessary for auditory transduction: plays a role in Johnston's organ organization by acting in scolopidial apical attachment. Interaction with the myosin ck may be important for this function. Localizes to and defines the trailing edge of cells during larval epidermal wound healing. This process is dependent on the phosphatidylinositol 4-phosphate 5-kinase sktl/skittles. This is Myosin heavy chain, non-muscle (zip) from Drosophila melanogaster (Fruit fly).